Here is a 257-residue protein sequence, read N- to C-terminus: NAD-capped RNA hydrolase NudC (257 aa).

Position 69 (Arg-69) interacts with substrate. Residues Cys-98 and Cys-101 each coordinate Zn(2+). Glu-111 serves as a coordination point for substrate. Residues Cys-116 and Cys-119 each contribute to the Zn(2+) site. Tyr-124 lines the substrate pocket. One can recognise a Nudix hydrolase domain in the interval 125–248; sequence PQIAPCIIVA…TVARRLIEDT (124 aa). Ala-158, Glu-174, and Glu-178 together coordinate a divalent metal cation. The Nudix box motif lies at 159 to 180; the sequence is GFVEVGETLEQAVAREVMEESG. Position 192–199 (192–199) interacts with substrate; sequence QPWPFPQS. Glu-219 provides a ligand contact to a divalent metal cation. Ala-241 is a binding site for substrate.

Belongs to the Nudix hydrolase family. NudC subfamily. In terms of assembly, homodimer. The cofactor is Mg(2+). It depends on Mn(2+) as a cofactor. Zn(2+) is required as a cofactor.

The enzyme catalyses a 5'-end NAD(+)-phospho-ribonucleoside in mRNA + H2O = a 5'-end phospho-adenosine-phospho-ribonucleoside in mRNA + beta-nicotinamide D-ribonucleotide + 2 H(+). It carries out the reaction NAD(+) + H2O = beta-nicotinamide D-ribonucleotide + AMP + 2 H(+). It catalyses the reaction NADH + H2O = reduced beta-nicotinamide D-ribonucleotide + AMP + 2 H(+). In terms of biological role, mRNA decapping enzyme that specifically removes the nicotinamide adenine dinucleotide (NAD) cap from a subset of mRNAs by hydrolyzing the diphosphate linkage to produce nicotinamide mononucleotide (NMN) and 5' monophosphate mRNA. The NAD-cap is present at the 5'-end of some mRNAs and stabilizes RNA against 5'-processing. Has preference for mRNAs with a 5'-end purine. Catalyzes the hydrolysis of a broad range of dinucleotide pyrophosphates. This Salmonella typhi protein is NAD-capped RNA hydrolase NudC.